Here is a 557-residue protein sequence, read N- to C-terminus: Protein NRT1/ PTR FAMILY 2.6 (557 aa).

12 helical membrane passes run 26 to 46, 67 to 87, 89 to 109, 136 to 156, 177 to 197, 203 to 223, 318 to 338, 356 to 376, 398 to 418, 439 to 459, 478 to 498, and 518 to 538; these read ITFP…LGWL, ILNI…IAAD, FFGT…GVVL, NIQL…AGGL, FFNW…TAIV, ISWS…LIVF, IIPL…QLGL, IPAG…IIVN, VGIG…VEAK, VLWL…HFPG, SITS…IDLI, and YWIL…CSWF.

It belongs to the major facilitator superfamily. Proton-dependent oligopeptide transporter (POT/PTR) (TC 2.A.17) family. Expressed in roots.

Its subcellular location is the membrane. Functionally, transporter involved in a passive nitrate efflux. The sequence is that of Protein NRT1/ PTR FAMILY 2.6 (NPF2.6) from Arabidopsis thaliana (Mouse-ear cress).